The following is a 317-amino-acid chain: Protein KlaC (317 aa).

Belongs to the kla operon, which is associated with cryptic tellurite resistance, and IncW plasmid fertility inhibition. The sequence is that of Protein KlaC (klaC) from Escherichia coli.